Consider the following 453-residue polypeptide: Ribulose bisphosphate carboxylase large chain (453 aa).

Residues 1-2 (MS) constitute a propeptide that is removed on maturation. N-acetylproline is present on Pro-3. Residue Lys-14 is modified to N6,N6,N6-trimethyllysine. 2 residues coordinate substrate: Asn-123 and Thr-173. Lys-175 functions as the Proton acceptor in the catalytic mechanism. Lys-177 lines the substrate pocket. Mg(2+)-binding residues include Lys-201, Asp-203, and Glu-204. An N6-carboxylysine modification is found at Lys-201. The active-site Proton acceptor is His-294. Substrate is bound by residues Arg-295, His-327, and Ser-379.

It belongs to the RuBisCO large chain family. Type I subfamily. In terms of assembly, heterohexadecamer of 8 large chains and 8 small chains; disulfide-linked. The disulfide link is formed within the large subunit homodimers. Requires Mg(2+) as cofactor. Post-translationally, the disulfide bond which can form in the large chain dimeric partners within the hexadecamer appears to be associated with oxidative stress and protein turnover.

It is found in the plastid. The protein localises to the chloroplast. It catalyses the reaction 2 (2R)-3-phosphoglycerate + 2 H(+) = D-ribulose 1,5-bisphosphate + CO2 + H2O. The enzyme catalyses D-ribulose 1,5-bisphosphate + O2 = 2-phosphoglycolate + (2R)-3-phosphoglycerate + 2 H(+). RuBisCO catalyzes two reactions: the carboxylation of D-ribulose 1,5-bisphosphate, the primary event in carbon dioxide fixation, as well as the oxidative fragmentation of the pentose substrate in the photorespiration process. Both reactions occur simultaneously and in competition at the same active site. The protein is Ribulose bisphosphate carboxylase large chain of Cruciata glabra (Slender crosswort).